A 120-amino-acid chain; its full sequence is MVRRGCALLLATLTRLMLLIHFFYSIIRILPSTELRSKTDLLSAEGRTLIPADVKAKPAGRKSRLPEFAKRQRTLALPERKDSLFCLLPLFLHSLGREQLISSADDPGFPCAGSAMGSLT.

This is an uncharacterized protein from Saccharomyces cerevisiae (strain ATCC 204508 / S288c) (Baker's yeast).